Reading from the N-terminus, the 107-residue chain is Inner membrane protein YiaW (107 aa).

Over 1 to 6 (MFLDYF) the chain is Cytoplasmic. Residues 7–29 (ALGVLIFVFLVIFYGIIILHDIP) traverse the membrane as a helical segment. Topologically, residues 30-43 (YLIAKKRNHPHADA) are periplasmic. A helical transmembrane segment spans residues 44 to 66 (IHVAGWVSLFTLHVIWPFLWIWA). Residues 67–107 (TLYRPERGWGMQSHDSSVMQLQQRIAGLEKQLADIKSSSAE) are Cytoplasmic-facing.

It to E.coli YibI.

The protein resides in the cell inner membrane. The chain is Inner membrane protein YiaW (yiaW) from Escherichia coli O157:H7.